Reading from the N-terminus, the 192-residue chain is tRNA (pseudouridine(54)-N(1))-methyltransferase (192 aa).

Positions 127 and 181 each coordinate S-adenosyl-L-methionine.

The protein belongs to the methyltransferase superfamily. TrmY family. In terms of assembly, homodimer.

Its subcellular location is the cytoplasm. The catalysed reaction is pseudouridine(54) in tRNA + S-adenosyl-L-methionine = N(1)-methylpseudouridine(54) in tRNA + S-adenosyl-L-homocysteine + H(+). In terms of biological role, specifically catalyzes the N1-methylation of pseudouridine at position 54 (Psi54) in tRNAs. The sequence is that of tRNA (pseudouridine(54)-N(1))-methyltransferase from Methanocella arvoryzae (strain DSM 22066 / NBRC 105507 / MRE50).